The sequence spans 473 residues: Photosystem II CP43 reaction center protein (473 aa).

The propeptide occupies 1–14; sequence MKTLYSLRRFYPVE. At T15 the chain carries N-acetylthreonine. T15 bears the Phosphothreonine mark. Helical transmembrane passes span 69–93, 134–155, 178–200, 255–275, and 291–312; these read LFEVAHFVPEKPMYEQGLILLPHLA, LLGPETLEESFPFFGYVWKDRN, KALYFGGVYDTWAPGGGDVRKIT, KPFAWARRAFVWSGEAYLSYS, and WFNNTAYPSEFYGPTGPEASQA. E367 lines the [CaMn4O5] cluster pocket. A helical transmembrane segment spans residues 447–471; sequence RARAAAAGFEKGIDRDFEPVLSMTP.

This sequence belongs to the PsbB/PsbC family. PsbC subfamily. In terms of assembly, PSII is composed of 1 copy each of membrane proteins PsbA, PsbB, PsbC, PsbD, PsbE, PsbF, PsbH, PsbI, PsbJ, PsbK, PsbL, PsbM, PsbT, PsbX, PsbY, PsbZ, Psb30/Ycf12, at least 3 peripheral proteins of the oxygen-evolving complex and a large number of cofactors. It forms dimeric complexes. Binds multiple chlorophylls and provides some of the ligands for the Ca-4Mn-5O cluster of the oxygen-evolving complex. It may also provide a ligand for a Cl- that is required for oxygen evolution. PSII binds additional chlorophylls, carotenoids and specific lipids. serves as cofactor.

It is found in the plastid. The protein resides in the chloroplast thylakoid membrane. Its function is as follows. One of the components of the core complex of photosystem II (PSII). It binds chlorophyll and helps catalyze the primary light-induced photochemical processes of PSII. PSII is a light-driven water:plastoquinone oxidoreductase, using light energy to abstract electrons from H(2)O, generating O(2) and a proton gradient subsequently used for ATP formation. The chain is Photosystem II CP43 reaction center protein from Amborella trichopoda.